The primary structure comprises 452 residues: Pup--protein ligase (452 aa).

E9 lines the Mg(2+) pocket. R53 is a binding site for ATP. Y55 lines the Mg(2+) pocket. D57 (proton acceptor) is an active-site residue. Residue E63 participates in Mg(2+) binding. Positions 66 and 419 each coordinate ATP.

This sequence belongs to the Pup ligase/Pup deamidase family. Pup-conjugating enzyme subfamily.

The catalysed reaction is ATP + [prokaryotic ubiquitin-like protein]-L-glutamate + [protein]-L-lysine = ADP + phosphate + N(6)-([prokaryotic ubiquitin-like protein]-gamma-L-glutamyl)-[protein]-L-lysine.. It participates in protein degradation; proteasomal Pup-dependent pathway. Its pathway is protein modification; protein pupylation. Catalyzes the covalent attachment of the prokaryotic ubiquitin-like protein modifier Pup to the proteasomal substrate proteins, thereby targeting them for proteasomal degradation. This tagging system is termed pupylation. The ligation reaction involves the side-chain carboxylate of the C-terminal glutamate of Pup and the side-chain amino group of a substrate lysine. This chain is Pup--protein ligase, found in Mycobacterium ulcerans (strain Agy99).